The following is a 235-amino-acid chain: Uridylate kinase (235 aa).

An ATP-binding site is contributed by 10 to 13 (KLSG). Residue Gly-52 coordinates UMP. ATP contacts are provided by Gly-53 and Arg-57. UMP-binding positions include Asp-72 and 133 to 140 (TSNPYFST). Residues Thr-160, Tyr-166, and Asp-169 each contribute to the ATP site.

This sequence belongs to the UMP kinase family. Homohexamer.

Its subcellular location is the cytoplasm. The enzyme catalyses UMP + ATP = UDP + ADP. It functions in the pathway pyrimidine metabolism; CTP biosynthesis via de novo pathway; UDP from UMP (UMPK route): step 1/1. Inhibited by UTP. In terms of biological role, catalyzes the reversible phosphorylation of UMP to UDP. This chain is Uridylate kinase, found in Solibacter usitatus (strain Ellin6076).